Here is a 137-residue protein sequence, read N- to C-terminus: Large ribosomal subunit protein uL16 (137 aa).

The protein belongs to the universal ribosomal protein uL16 family. Part of the 50S ribosomal subunit.

In terms of biological role, binds 23S rRNA and is also seen to make contacts with the A and possibly P site tRNAs. The chain is Large ribosomal subunit protein uL16 from Wolbachia sp. subsp. Brugia malayi (strain TRS).